Reading from the N-terminus, the 210-residue chain is uncharacterized protein (210 aa).

The signal sequence occupies residues 1–21; the sequence is MLKMNVKKALVILVALALVAA.

This is an uncharacterized protein from Archaeoglobus fulgidus (strain ATCC 49558 / DSM 4304 / JCM 9628 / NBRC 100126 / VC-16).